Here is a 372-residue protein sequence, read N- to C-terminus: Alanine dehydrogenase 1 (372 aa).

Histidine 94 is an active-site residue. 170-200 contacts NAD(+); the sequence is TYVIFGGGVAATNAANVALGLNAKVIIIELN.

It belongs to the AlaDH/PNT family.

It catalyses the reaction L-alanine + NAD(+) + H2O = pyruvate + NH4(+) + NADH + H(+). It participates in amino-acid degradation; L-alanine degradation via dehydrogenase pathway; NH(3) and pyruvate from L-alanine: step 1/1. May play a role in cell wall synthesis as L-alanine is an important constituent of the peptidoglycan layer. This chain is Alanine dehydrogenase 1 (ald1), found in Staphylococcus aureus (strain USA300).